Here is a 228-residue protein sequence, read N- to C-terminus: Ankyrin repeat domain-containing protein 46 (228 aa).

ANK repeat units follow at residues 11–40 (QTNVPLLQACIDGDFTYSKRLLESGFDPNI), 44–74 (RGRTGLHLAAARGNVDICQLLHKFGADPLAT), 77–103 (QGNTALHLCGHVDTIQFLVSNGLKIDI), and 107–138 (QGATPLVLAKRRGVNKDVIRLLESLEEQEVKG). The helical transmembrane segment at 195 to 215 (VLLLILVIALLSLGIAYYVSG) threads the bilayer.

The protein resides in the membrane. This chain is Ankyrin repeat domain-containing protein 46 (Ankrd46), found in Mus musculus (Mouse).